We begin with the raw amino-acid sequence, 81 residues long: Costars family protein ABRACL (81 aa).

Methionine 1 carries the N-acetylmethionine modification.

Belongs to the costars family.

The protein is Costars family protein ABRACL (Abracl) of Mus musculus (Mouse).